Reading from the N-terminus, the 1044-residue chain is Isoleucine--tRNA ligase (1044 aa).

The short motif at P48 to H58 is the 'HIGH' region element. Residues K594–S598 carry the 'KMSKS' region motif. ATP is bound at residue K597.

This sequence belongs to the class-I aminoacyl-tRNA synthetase family. IleS type 2 subfamily. As to quaternary structure, monomer. Zn(2+) serves as cofactor.

The protein localises to the cytoplasm. It carries out the reaction tRNA(Ile) + L-isoleucine + ATP = L-isoleucyl-tRNA(Ile) + AMP + diphosphate. Catalyzes the attachment of isoleucine to tRNA(Ile). As IleRS can inadvertently accommodate and process structurally similar amino acids such as valine, to avoid such errors it has two additional distinct tRNA(Ile)-dependent editing activities. One activity is designated as 'pretransfer' editing and involves the hydrolysis of activated Val-AMP. The other activity is designated 'posttransfer' editing and involves deacylation of mischarged Val-tRNA(Ile). This chain is Isoleucine--tRNA ligase, found in Borrelia recurrentis (strain A1).